The primary structure comprises 216 residues: Glycerol-3-phosphate acyltransferase (216 aa).

5 helical membrane-spanning segments follow: residues T4–G24, L71–I91, V113–L133, V144–L164, and P165–R185.

Belongs to the PlsY family. Probably interacts with PlsX.

It localises to the cell membrane. It catalyses the reaction an acyl phosphate + sn-glycerol 3-phosphate = a 1-acyl-sn-glycero-3-phosphate + phosphate. It participates in lipid metabolism; phospholipid metabolism. Its function is as follows. Catalyzes the transfer of an acyl group from acyl-phosphate (acyl-PO(4)) to glycerol-3-phosphate (G3P) to form lysophosphatidic acid (LPA). This enzyme utilizes acyl-phosphate as fatty acyl donor, but not acyl-CoA or acyl-ACP. The sequence is that of Glycerol-3-phosphate acyltransferase from Streptococcus sanguinis (strain SK36).